A 362-amino-acid polypeptide reads, in one-letter code: DNA replication and repair protein RecF (362 aa).

Residue 31–38 coordinates ATP; sequence GDNAAGKT.

This sequence belongs to the RecF family.

The protein resides in the cytoplasm. In terms of biological role, the RecF protein is involved in DNA metabolism; it is required for DNA replication and normal SOS inducibility. RecF binds preferentially to single-stranded, linear DNA. It also seems to bind ATP. The sequence is that of DNA replication and repair protein RecF from Hydrogenovibrio crunogenus (strain DSM 25203 / XCL-2) (Thiomicrospira crunogena).